The following is a 506-amino-acid chain: Glutamate--tRNA ligase (506 aa).

A 'HIGH' region motif is present at residues 24 to 34 (PSPTGLQHIGG). Zn(2+) is bound by residues C121, C123, C148, and H150. The 'KMSKS' region signature appears at 266-270 (KLSKR). K269 lines the ATP pocket.

Belongs to the class-I aminoacyl-tRNA synthetase family. Glutamate--tRNA ligase type 1 subfamily. Monomer. Requires Zn(2+) as cofactor.

It is found in the cytoplasm. It carries out the reaction tRNA(Glu) + L-glutamate + ATP = L-glutamyl-tRNA(Glu) + AMP + diphosphate. Functionally, catalyzes the attachment of glutamate to tRNA(Glu) in a two-step reaction: glutamate is first activated by ATP to form Glu-AMP and then transferred to the acceptor end of tRNA(Glu). This Borrelia recurrentis (strain A1) protein is Glutamate--tRNA ligase.